Here is a 462-residue protein sequence, read N- to C-terminus: Putative zinc metalloprotease RSc1411 (462 aa).

A helical membrane pass occupies residues 1 to 21 (MLTVLAFVFAIAVLIVVHELG). Residue H18 participates in Zn(2+) binding. The active site involves E19. H22 serves as a coordination point for Zn(2+). The helical transmembrane segment at 102 to 124 (FAIVAAGPVFNFLLAIALYALLA) threads the bilayer. The PDZ domain occupies 201-283 (TVRLRELPSA…MPEQNASIDI (83 aa)). Helical transmembrane passes span 386–406 (FVAFLALISVSLGVLNLLPVP) and 430–450 (WQAVLQKIGIACILLLTSLAL).

Belongs to the peptidase M50B family. It depends on Zn(2+) as a cofactor.

The protein localises to the cell inner membrane. The sequence is that of Putative zinc metalloprotease RSc1411 from Ralstonia nicotianae (strain ATCC BAA-1114 / GMI1000) (Ralstonia solanacearum).